Reading from the N-terminus, the 564-residue chain is Ovochymase-2 (564 aa).

Residues 1–22 form the signal peptide; sequence MLISRNKLILLLGIVFFERGKS. Positions 23-51 are cleaved as a propeptide — activation peptide; the sequence is ATLSLPKAPSCGQSLVKVQPWNYFNIFSR. Residues 52–299 enclose the Peptidase S1 domain; the sequence is ILGGSQVEKG…VLPWIHEHIQ (248 aa). Residues C77 and C93 are joined by a disulfide bond. H92 functions as the Charge relay system in the catalytic mechanism. N104 carries an N-linked (GlcNAc...) asparagine glycan. E119 contacts Ca(2+). The active-site Charge relay system is D142. Intrachain disulfides connect C176/C246, C207/C225, C236/C265, C311/C341, and C365/C384. Residue S240 is the Charge relay system of the active site. CUB domains are found at residues 311-421 and 431-543; these read CSEQ…YKAL and CSYL…VSFI. N-linked (GlcNAc...) asparagine glycans are attached at residues N415 and N451. Cystine bridges form between C431-C458 and C485-C506. N530 carries an N-linked (GlcNAc...) asparagine glycan.

Belongs to the peptidase S1 family.

It localises to the secreted. May be required for sperm ADAM3 processing and consequential sperm fertilizing ability. In vitro, has an endopeptidase activity. The sequence is that of Ovochymase-2 from Homo sapiens (Human).